We begin with the raw amino-acid sequence, 71 residues long: Large ribosomal subunit protein bL31 (71 aa).

Zn(2+) is bound by residues C16, C18, C36, and C39.

This sequence belongs to the bacterial ribosomal protein bL31 family. Type A subfamily. As to quaternary structure, part of the 50S ribosomal subunit. Zn(2+) is required as a cofactor.

Binds the 23S rRNA. The chain is Large ribosomal subunit protein bL31 from Pseudothermotoga lettingae (strain ATCC BAA-301 / DSM 14385 / NBRC 107922 / TMO) (Thermotoga lettingae).